The chain runs to 398 residues: Phosphoglycerate kinase (398 aa).

Residues 24–26 (DFN), arginine 39, 62–65 (HFGR), arginine 121, and arginine 154 contribute to the substrate site. ATP is bound by residues lysine 205, glycine 296, glutamate 327, and 354–357 (GGDS).

It belongs to the phosphoglycerate kinase family. In terms of assembly, monomer.

It is found in the cytoplasm. It catalyses the reaction (2R)-3-phosphoglycerate + ATP = (2R)-3-phospho-glyceroyl phosphate + ADP. It functions in the pathway carbohydrate degradation; glycolysis; pyruvate from D-glyceraldehyde 3-phosphate: step 2/5. The chain is Phosphoglycerate kinase from Trichodesmium erythraeum (strain IMS101).